Reading from the N-terminus, the 544-residue chain is Transcription factor bHLH119 (544 aa).

2 disordered regions span residues Asn-12–Arg-59 and Val-185–Val-208. Residues Val-15–Pro-29 show a composition bias toward polar residues. Residues Leu-50 to Arg-59 show a composition bias toward pro residues. Phosphothreonine is present on Thr-269. A Phosphoserine modification is found at Ser-274. 2 disordered regions span residues Gln-342–Leu-364 and Gln-522–Lys-544. One can recognise a bHLH domain in the interval Arg-357 to Leu-406. Residues Gln-522–Pro-535 show a composition bias toward low complexity. 2 positions are modified to phosphoserine: Ser-541 and Ser-543.

As to quaternary structure, homodimer.

It is found in the nucleus. The protein is Transcription factor bHLH119 (BHLH119) of Arabidopsis thaliana (Mouse-ear cress).